A 276-amino-acid polypeptide reads, in one-letter code: Expansin-like A3 (276 aa).

The first 28 residues, 1–28 (MAVLLSILSSSFLLLLAASSSSTPRASA), serve as a signal peptide directing secretion. The region spanning 52 to 158 (GGGCGYGAMA…RRIPCDYKDK (107 aa)) is the Expansin-like EG45 domain. Asparagine 115 and asparagine 159 each carry an N-linked (GlcNAc...) asparagine glycan. The region spanning 172–255 (NNLVIKFLYQ…NWQPGQVYDT (84 aa)) is the Expansin-like CBD domain.

The protein belongs to the expansin family. Expansin-like A subfamily.

The protein localises to the secreted. This Oryza sativa subsp. japonica (Rice) protein is Expansin-like A3 (EXLA3).